The following is a 924-amino-acid chain: Phosphatidate phosphatase LPIN1 (924 aa).

Residues 1–108 (MNYVGQLAGQ…IPMYLATSPI (108 aa)) are N-LIP. Residues Ser-106 and Ser-150 each carry the phosphoserine modification. 2 disordered regions span residues 133–248 (PTTA…DCQR) and 269–297 (FHAS…ADRL). The span at 152 to 161 (GKKRRKRRRK) shows a compositional bias: basic residues. Residues 153–158 (KKRRKR) carry the Nuclear localization signal motif. Residues 162–172 (AQLDNLKRDDN) show a composition bias toward basic and acidic residues. The span at 176–193 (SEDEDMFPIEMSSDEDTA) shows a compositional bias: acidic residues. 2 stretches are compositionally biased toward polar residues: residues 218–229 (PSISTHPQSASY) and 273–284 (ESPSGSRPSTPK). 3 positions are modified to phosphoserine: Ser-285, Ser-287, and Ser-293. The segment covering 285–297 (SDSELVSKSADRL) has biased composition (basic and acidic residues). A Phosphothreonine modification is found at Thr-298. Disordered stretches follow at residues 314–426 (QAAK…SRHL) and 446–490 (LYFP…STSD). At Ser-328 the chain carries Phosphoserine. The segment covering 343–358 (AIHSESSDTFSDQSPT) has biased composition (polar residues). Ser-392 carries the post-translational modification Phosphoserine. Residues 404–413 (NTAQSSSKTD) are compositionally biased toward polar residues. Position 459 is an N6-acetyllysine (Lys-459). Residues 461–476 (ASDNGARSANQSPQSV) show a composition bias toward polar residues. Phosphoserine occurs at positions 468, 472, and 483. Glycyl lysine isopeptide (Lys-Gly) (interchain with G-Cter in SUMO) cross-links involve residues Lys-599 and Lys-629. The interval 627–649 (RIKHESSSSDEEHAAAKPSGSSH) is disordered. Basic and acidic residues predominate over residues 628 to 641 (IKHESSSSDEEHAA). Lys-629 is subject to N6-acetyllysine. Residues Ser-634 and Ser-635 each carry the phosphoserine modification. The interval 658–864 (YKKTLRLTSE…VNPKGELVQE (207 aa)) is C-LIP. The DXDXT motif motif lies at 712–716 (DIDGT). The LXXIL motif signature appears at 723-727 (LGHIL). Phosphoserine occurs at positions 921 and 923.

Belongs to the lipin family. In terms of assembly, interacts (via LXXIL motif) with PPARA. Interacts with PPARGC1A. Interaction with PPARA and PPARGC1A leads to the formation of a complex that modulates gene transcription. Interacts with MEF2C. Mg(2+) serves as cofactor. In terms of processing, phosphorylated at multiple sites in response to insulin. Phosphorylation is controlled by the mTOR signaling pathway. Phosphorylation is decreased by epinephrine. Phosphorylation may not directly affect the catalytic activity but may regulate the localization. Dephosphorylated by the CTDNEP1-CNEP1R1 complex. Phosphorylated at multiple sites by mTOR in response to insulin, leading to its inactivation. Phosphorylation does not affect the catalytic activity but regulates the localization. Phosphorylation is decreased by epinephrine. Dephosphorylated by the CTDNEP1-CNEP1R1 complex. Dephosphorylation following mTOR inhibition promotes its activity. Post-translationally, sumoylation is important in brain and is marginal in other tissues. Sumoylation facilitates nuclear localization of isoform 2 in neuronals cells and its transcriptional coactivator activity. In terms of processing, acetylation at Lys-459 and Lys-629 by KAT5 in response to fatty acids promotes translocation to the endoplasmic reticulum and synthesis of diacylglycerol. Specifically expressed in skeletal muscle. Also expressed prominently in adipose tissue, and testis. Lower expression also detected in kidney, lung, brain and liver. As to expression, predominant isoform in the liver. In terms of tissue distribution, predominant isoform in the brain.

It is found in the mitochondrion outer membrane. Its subcellular location is the cytoplasm. The protein localises to the nucleus membrane. The protein resides in the nucleus. It localises to the endoplasmic reticulum membrane. The catalysed reaction is a 1,2-diacyl-sn-glycero-3-phosphate + H2O = a 1,2-diacyl-sn-glycerol + phosphate. It catalyses the reaction 1-octadecanoyl-2-(4Z,7Z,10Z,13Z,16Z,19Z-docosahexaenoyl)-sn-glycero-3-phosphate + H2O = 1-octadecanoyl-2-(4Z,7Z,10Z,13Z,16Z,19Z-docosahexaenoyl)-sn-glycerol + phosphate. It carries out the reaction 1-octadecanoyl-2-(5Z,8Z,11Z,14Z-eicosatetraenoyl)-sn-glycero-3-phosphate + H2O = 1-octadecanoyl-2-(5Z,8Z,11Z,14Z-eicosatetraenoyl)-sn-glycerol + phosphate. The enzyme catalyses 1-octadecanoyl-2-(9Z,12Z-octadecadienoyl)-sn-glycero-3-phosphate + H2O = 1-octadecanoyl-2-(9Z,12Z)-octadecadienoyl-sn-glycerol + phosphate. The catalysed reaction is 1-octadecanoyl-2-(9Z-octadecenoyl)-sn-glycero-3-phosphate + H2O = 1-octadecanoyl-2-(9Z-octadecenoyl)-sn-glycerol + phosphate. It catalyses the reaction 1-hexadecanoyl-2-(4Z,7Z,10Z,13Z,16Z,19Z-docosahexaenoyl)-sn-glycero-3-phosphate + H2O = 1-hexadecanoyl-2-(4Z,7Z,10Z,13Z,16Z,19Z-docosahexaenoyl)-sn-glycerol + phosphate. It carries out the reaction 1,2-dioctadecanoyl-sn-glycero-3-phosphate + H2O = 1,2-dioctadecanoyl-sn-glycerol + phosphate. The enzyme catalyses 1-hexadecanoyl-2-(5Z,8Z,11Z,14Z-eicosatetraenoyl)-sn-glycero-3-phosphate + H2O = 1-hexadecanoyl-2-(5Z,8Z,11Z,14Z-eicosatetraenoyl)-sn-glycerol + phosphate. The catalysed reaction is 1-hexadecanoyl-2-(9Z,12Z-octadecadienoyl)-sn-glycero-3-phosphate + H2O = 1-hexadecanoyl-2-(9Z,12Z-octadecadienoyl)-sn-glycerol + phosphate. It catalyses the reaction 1-hexadecanoyl-2-(9Z-octadecenoyl)-sn-glycero-3-phosphate + H2O = 1-hexadecanoyl-2-(9Z-octadecenoyl)-sn-glycerol + phosphate. It carries out the reaction 1,2-di-(4Z,7Z,10Z,13Z,16Z,19Z-docosahexaenoyl)-sn-glycero-3-phosphate + H2O = 1,2-di-(4Z,7Z,10Z,13Z,16Z,19Z-docosahexaenoyl)-sn-glycerol + phosphate. The enzyme catalyses 1,2-di-(5Z,8Z,11Z,14Z)-eicosatetraenoyl-sn-glycero-3-phosphate + H2O = 1,2-di-(5Z,8Z,11Z,14Z)-eicosatetraenoyl-sn-glycerol + phosphate. The catalysed reaction is 1,2-di-(9Z,12Z-octadecadienoyl)-sn-glycero-3-phosphate + H2O = 1,2-di-(9Z,12Z-octadecadienoyl)-sn-glycerol + phosphate. It catalyses the reaction 1,2-di-(9Z-octadecenoyl)-sn-glycero-3-phosphate + H2O = 1,2-di-(9Z-octadecenoyl)-sn-glycerol + phosphate. It carries out the reaction 1,2-dihexadecanoyl-sn-glycero-3-phosphate + H2O = 1,2-dihexadecanoyl-sn-glycerol + phosphate. Inhibited by N-ethylmaleimide treatment. Acts as a magnesium-dependent phosphatidate phosphatase enzyme which catalyzes the conversion of phosphatidic acid to diacylglycerol during triglyceride, phosphatidylcholine and phosphatidylethanolamine biosynthesis and therefore controls the metabolism of fatty acids at different levels. Is involved in adipocyte differentiation. Also acts as nuclear transcriptional coactivator for PPARGC1A/PPARA regulatory pathway to modulate lipid metabolism gene expression. In terms of biological role, recruited at the mitochondrion outer membrane and is involved in mitochondrial fission by converting phosphatidic acid to diacylglycerol. The sequence is that of Phosphatidate phosphatase LPIN1 (Lpin1) from Mus musculus (Mouse).